We begin with the raw amino-acid sequence, 365 residues long: Probable protein kinase At2g41970 (365 aa).

The disordered stretch occupies residues Met1 to Pro50. The region spanning Phe73–Leu354 is the Protein kinase domain. Residues Ile79 to Val87 and Lys100 contribute to the ATP site. Tyr146 bears the Phosphotyrosine mark. Asp204 acts as the Proton acceptor in catalysis. 2 positions are modified to phosphoserine: Ser208 and Ser238. Phosphothreonine is present on residues Thr239 and Thr244. At Tyr252 the chain carries Phosphotyrosine.

It belongs to the protein kinase superfamily. Tyr protein kinase family.

This chain is Probable protein kinase At2g41970, found in Arabidopsis thaliana (Mouse-ear cress).